Here is a 307-residue protein sequence, read N- to C-terminus: Ribosomal RNA small subunit methyltransferase H (307 aa).

Residues 32–34 (GGH), Asp-52, Phe-78, Asp-99, and Gln-106 contribute to the S-adenosyl-L-methionine site.

The protein belongs to the methyltransferase superfamily. RsmH family.

Its subcellular location is the cytoplasm. The enzyme catalyses cytidine(1402) in 16S rRNA + S-adenosyl-L-methionine = N(4)-methylcytidine(1402) in 16S rRNA + S-adenosyl-L-homocysteine + H(+). Functionally, specifically methylates the N4 position of cytidine in position 1402 (C1402) of 16S rRNA. The sequence is that of Ribosomal RNA small subunit methyltransferase H from Caldicellulosiruptor saccharolyticus (strain ATCC 43494 / DSM 8903 / Tp8T 6331).